Consider the following 227-residue polypeptide: Enolase-phosphatase E1 (227 aa).

Asp-11 and Glu-13 together coordinate Mg(2+). Substrate is bound by residues 118-119 (SS) and Lys-161. Asp-186 contributes to the Mg(2+) binding site.

The protein belongs to the HAD-like hydrolase superfamily. MasA/MtnC family. Monomer. Requires Mg(2+) as cofactor.

It is found in the cytoplasm. The protein resides in the nucleus. The catalysed reaction is 5-methylsulfanyl-2,3-dioxopentyl phosphate + H2O = 1,2-dihydroxy-5-(methylsulfanyl)pent-1-en-3-one + phosphate. The protein operates within amino-acid biosynthesis; L-methionine biosynthesis via salvage pathway; L-methionine from S-methyl-5-thio-alpha-D-ribose 1-phosphate: step 3/6. It functions in the pathway amino-acid biosynthesis; L-methionine biosynthesis via salvage pathway; L-methionine from S-methyl-5-thio-alpha-D-ribose 1-phosphate: step 4/6. Functionally, bifunctional enzyme that catalyzes the enolization of 2,3-diketo-5-methylthiopentyl-1-phosphate (DK-MTP-1-P) into the intermediate 2-hydroxy-3-keto-5-methylthiopentenyl-1-phosphate (HK-MTPenyl-1-P), which is then dephosphorylated to form the acireductone 1,2-dihydroxy-3-keto-5-methylthiopentene (DHK-MTPene). In Saccharomyces cerevisiae (strain YJM789) (Baker's yeast), this protein is Enolase-phosphatase E1.